The primary structure comprises 725 residues: Putative coiled-coil domain-containing protein 144B (725 aa).

Residues 1–11 (MASWGGEKRGG) are compositionally biased toward basic and acidic residues. Disordered regions lie at residues 1–25 (MASW…ATRK), 87–188 (AARS…NLTE), 213–260 (LPEN…DCDR), 453–485 (NMNQ…DSDR), and 528–586 (EEEM…KVKN). 2 stretches are compositionally biased toward polar residues: residues 129 to 150 (PESL…LSDE) and 165 to 178 (PSVS…QSAT). Positions 215-244 (ENKESKEAEQDLELTSEEEQERLKGCENKQ) form a coiled coil. A compositionally biased stretch (acidic residues) spans 224-234 (QDLELTSEEEQ). The segment covering 453-467 (NMNQNSDSGSTNNYK) has biased composition (polar residues). The stretch at 490 to 546 (YLHEELQQDMQKFKNEVNTLEEEFLALKKENVQLHKEVEEEMEKHRSNSTELSGTLT) forms a coiled coil. Over residues 528–537 (EEEMEKHRSN) the composition is skewed to basic and acidic residues. Residues 543–552 (GTLTDGTTVG) show a composition bias toward low complexity. Positions 563–583 (PRKENEEHDRPADKTANEKNK) are enriched in basic and acidic residues. The stretch at 648–713 (LLKLKNNHCD…ALKQENGRKE (66 aa)) forms a coiled coil.

This sequence belongs to the CCDC144 family.

This chain is Putative coiled-coil domain-containing protein 144B, found in Homo sapiens (Human).